A 343-amino-acid polypeptide reads, in one-letter code: Anthranilate phosphoribosyltransferase (343 aa).

Residues Gly84, 87 to 88, Thr92, 94 to 97, 112 to 120, and Ser124 contribute to the 5-phospho-alpha-D-ribose 1-diphosphate site; these read GD, NIST, and KHGNRGVSS. Gly84 provides a ligand contact to anthranilate. Position 96 (Ser96) interacts with Mg(2+). Asn115 is an anthranilate binding site. Arg170 serves as a coordination point for anthranilate. Asp229 and Glu230 together coordinate Mg(2+).

The protein belongs to the anthranilate phosphoribosyltransferase family. In terms of assembly, homodimer. Requires Mg(2+) as cofactor.

The enzyme catalyses N-(5-phospho-beta-D-ribosyl)anthranilate + diphosphate = 5-phospho-alpha-D-ribose 1-diphosphate + anthranilate. Its pathway is amino-acid biosynthesis; L-tryptophan biosynthesis; L-tryptophan from chorismate: step 2/5. Catalyzes the transfer of the phosphoribosyl group of 5-phosphorylribose-1-pyrophosphate (PRPP) to anthranilate to yield N-(5'-phosphoribosyl)-anthranilate (PRA). In Burkholderia thailandensis (strain ATCC 700388 / DSM 13276 / CCUG 48851 / CIP 106301 / E264), this protein is Anthranilate phosphoribosyltransferase.